The following is a 417-amino-acid chain: Phosphoglycerate kinase (417 aa).

Residues Val-23, Asp-24, Phe-25, Asn-26, Gln-39, Arg-40, Ser-63, His-64, Gly-66, Arg-67, Leu-122, Arg-123, His-170, and Arg-171 each contribute to the (2R)-3-phosphoglycerate site. Position 214 (Gly-214) interacts with ADP. Gly-214 lines the CDP pocket. AMP contacts are provided by Ala-215 and Lys-216. Position 215 (Ala-215) interacts with ATP. Ala-215 provides a ligand contact to Mg(2+). Residue Asp-219 participates in CDP binding. Residue Asp-219 participates in Mg(2+) binding. An AMP-binding site is contributed by Lys-220. Lys-220 is a binding site for ATP. Gly-238 is an ADP binding site. Gly-238 serves as a coordination point for CDP. The AMP site is built by Gly-239 and Gly-313. ATP-binding residues include Gly-239 and Gly-313. The CDP site is built by Gly-338 and Phe-343. Phe-343 is an ADP binding site. Position 344 (Glu-344) interacts with AMP. 3 residues coordinate ATP: Glu-344, Asp-375, and Thr-376. Asp-375 is a binding site for Mg(2+).

This sequence belongs to the phosphoglycerate kinase family. As to quaternary structure, monomer. The cofactor is Mg(2+).

Its subcellular location is the cytoplasm. It is found in the mitochondrion. The enzyme catalyses (2R)-3-phosphoglycerate + ATP = (2R)-3-phospho-glyceroyl phosphate + ADP. Its pathway is carbohydrate degradation; glycolysis; pyruvate from D-glyceraldehyde 3-phosphate: step 2/5. Catalyzes one of the two ATP producing reactions in the glycolytic pathway via the reversible conversion of 1,3-diphosphoglycerate to 3-phosphoglycerate. Both L- and D- forms of purine and pyrimidine nucleotides can be used as substrates, but the activity is much lower on pyrimidines. Negatively regulates the biosynthesis of acetyl-CoA from pyruvate in the mitochondrion. The chain is Phosphoglycerate kinase (PGKA) from Penicillium citrinum.